A 220-amino-acid chain; its full sequence is DNA-directed RNA polymerase subunit alpha (220 aa).

This sequence belongs to the RNA polymerase alpha chain family. In plastids the minimal PEP RNA polymerase catalytic core is composed of four subunits: alpha, beta, beta', and beta''. When a (nuclear-encoded) sigma factor is associated with the core the holoenzyme is formed, which can initiate transcription.

The protein resides in the plastid. It catalyses the reaction RNA(n) + a ribonucleoside 5'-triphosphate = RNA(n+1) + diphosphate. Functionally, DNA-dependent RNA polymerase catalyzes the transcription of DNA into RNA using the four ribonucleoside triphosphates as substrates. The protein is DNA-directed RNA polymerase subunit alpha (rpoA) of Euglena longa (Euglenophycean alga).